Consider the following 105-residue polypeptide: Large ribosomal subunit protein uL24 (105 aa).

This sequence belongs to the universal ribosomal protein uL24 family. As to quaternary structure, part of the 50S ribosomal subunit.

In terms of biological role, one of two assembly initiator proteins, it binds directly to the 5'-end of the 23S rRNA, where it nucleates assembly of the 50S subunit. Functionally, one of the proteins that surrounds the polypeptide exit tunnel on the outside of the subunit. This Psychrobacter cryohalolentis (strain ATCC BAA-1226 / DSM 17306 / VKM B-2378 / K5) protein is Large ribosomal subunit protein uL24.